The sequence spans 371 residues: Ferrochelatase (371 aa).

Fe cation is bound by residues His-218 and Glu-299.

The protein belongs to the ferrochelatase family.

It localises to the cytoplasm. It catalyses the reaction heme b + 2 H(+) = protoporphyrin IX + Fe(2+). It participates in porphyrin-containing compound metabolism; protoheme biosynthesis; protoheme from protoporphyrin-IX: step 1/1. In terms of biological role, catalyzes the ferrous insertion into protoporphyrin IX. In Ralstonia pickettii (strain 12J), this protein is Ferrochelatase.